The sequence spans 365 residues: Aspartate-semialdehyde dehydrogenase (365 aa).

The NADP(+) site is built by T13, G14, S15, V16, S38, S41, L85, and D86. Position 13 is a phosphothreonine (T13). The active-site Acyl-thioester intermediate is the C156. G188 is an NADP(+) binding site. H256 functions as the Proton acceptor in the catalytic mechanism. Phosphoserine occurs at positions 318 and 323. N343 is an NADP(+) binding site.

Belongs to the aspartate-semialdehyde dehydrogenase family. As to quaternary structure, homotetramer.

The protein localises to the cytoplasm. It is found in the cytosol. Its subcellular location is the nucleus. The catalysed reaction is L-aspartate 4-semialdehyde + phosphate + NADP(+) = 4-phospho-L-aspartate + NADPH + H(+). It participates in amino-acid biosynthesis; L-methionine biosynthesis via de novo pathway; L-homoserine from L-aspartate: step 2/3. Its pathway is amino-acid biosynthesis; L-threonine biosynthesis; L-threonine from L-aspartate: step 2/5. Catalyzes the NADPH-dependent formation of L-aspartate 4-semialdehyde (L-ASA) by the reductive dephosphorylation of 4-phospho-L-aspartate. Mediates the second step in the biosynthesis of amino acids that derive from aspartate (the aspartate family of amino acids), including methioinine and threonine, the latter of which is a precursor to isoleucine. This Saccharomyces cerevisiae (strain ATCC 204508 / S288c) (Baker's yeast) protein is Aspartate-semialdehyde dehydrogenase (HOM2).